The chain runs to 105 residues: Large ribosomal subunit protein uL24 (105 aa).

This sequence belongs to the universal ribosomal protein uL24 family. In terms of assembly, part of the 50S ribosomal subunit.

Functionally, one of two assembly initiator proteins, it binds directly to the 5'-end of the 23S rRNA, where it nucleates assembly of the 50S subunit. In terms of biological role, one of the proteins that surrounds the polypeptide exit tunnel on the outside of the subunit. In Xanthomonas axonopodis pv. citri (strain 306), this protein is Large ribosomal subunit protein uL24.